The sequence spans 141 residues: MRHKLGQRKLGRTSSHRIALLRNMAAALIKHEQITTTLPKARELRPYLEKLITLGKKGGLSNRRLAHARLLDEAQEQKLFTTLAERYADRNGGYTRIIKAGYRASDAAPLAVIELVDRDTSAKGQDSGPVLTADEDEFEAA.

The disordered stretch occupies residues 120–141; the sequence is TSAKGQDSGPVLTADEDEFEAA.

It belongs to the bacterial ribosomal protein bL17 family. In terms of assembly, part of the 50S ribosomal subunit. Contacts protein L32.

The chain is Large ribosomal subunit protein bL17 from Novosphingobium aromaticivorans (strain ATCC 700278 / DSM 12444 / CCUG 56034 / CIP 105152 / NBRC 16084 / F199).